Consider the following 240-residue polypeptide: Cell division control protein 14 (240 aa).

Interacts with sid1.

It localises to the cytoplasm. The protein resides in the cytoskeleton. The protein localises to the microtubule organizing center. It is found in the spindle pole body. Has a role in the septation initiation network (SIN) required for cytokinesis. The sequence is that of Cell division control protein 14 (cdc14) from Schizosaccharomyces pombe (strain 972 / ATCC 24843) (Fission yeast).